Here is a 154-residue protein sequence, read N- to C-terminus: MRILGIDPGLARVGYGVIDTSGGQQRMLDCGIIRTEPGYSEGDRMVVIASDLRQLIRAWRPELAAVEKFFFYRSSTTISVVQARGVVMMTLARFKVPVVEFPPMQIKLALAGFGHAEKDEVLEAVMRELNLTDPPRPDDAADALAVALTGWFQR.

Catalysis depends on residues Asp7, Glu67, and Asp139. Positions 7, 67, and 139 each coordinate Mg(2+).

The protein belongs to the RuvC family. Homodimer which binds Holliday junction (HJ) DNA. The HJ becomes 2-fold symmetrical on binding to RuvC with unstacked arms; it has a different conformation from HJ DNA in complex with RuvA. In the full resolvosome a probable DNA-RuvA(4)-RuvB(12)-RuvC(2) complex forms which resolves the HJ. It depends on Mg(2+) as a cofactor.

It is found in the cytoplasm. It catalyses the reaction Endonucleolytic cleavage at a junction such as a reciprocal single-stranded crossover between two homologous DNA duplexes (Holliday junction).. Functionally, the RuvA-RuvB-RuvC complex processes Holliday junction (HJ) DNA during genetic recombination and DNA repair. Endonuclease that resolves HJ intermediates. Cleaves cruciform DNA by making single-stranded nicks across the HJ at symmetrical positions within the homologous arms, yielding a 5'-phosphate and a 3'-hydroxyl group; requires a central core of homology in the junction. The consensus cleavage sequence is 5'-(A/T)TT(C/G)-3'. Cleavage occurs on the 3'-side of the TT dinucleotide at the point of strand exchange. HJ branch migration catalyzed by RuvA-RuvB allows RuvC to scan DNA until it finds its consensus sequence, where it cleaves and resolves the cruciform DNA. The protein is Crossover junction endodeoxyribonuclease RuvC of Synechococcus sp. (strain CC9902).